We begin with the raw amino-acid sequence, 313 residues long: tRNA dimethylallyltransferase (313 aa).

ATP is bound at residue 9 to 16 (GPTASGKT). 11–16 (TASGKT) is a substrate binding site. The segment at 34-37 (DSMQ) is interaction with substrate tRNA.

This sequence belongs to the IPP transferase family. In terms of assembly, monomer. The cofactor is Mg(2+).

The catalysed reaction is adenosine(37) in tRNA + dimethylallyl diphosphate = N(6)-dimethylallyladenosine(37) in tRNA + diphosphate. In terms of biological role, catalyzes the transfer of a dimethylallyl group onto the adenine at position 37 in tRNAs that read codons beginning with uridine, leading to the formation of N6-(dimethylallyl)adenosine (i(6)A). The sequence is that of tRNA dimethylallyltransferase from Acetivibrio thermocellus (strain ATCC 27405 / DSM 1237 / JCM 9322 / NBRC 103400 / NCIMB 10682 / NRRL B-4536 / VPI 7372) (Clostridium thermocellum).